The primary structure comprises 292 residues: 4-hydroxy-tetrahydrodipicolinate synthase (292 aa).

Residue Thr45 participates in pyruvate binding. Tyr133 (proton donor/acceptor) is an active-site residue. Lys161 serves as the catalytic Schiff-base intermediate with substrate. Ile203 contributes to the pyruvate binding site.

The protein belongs to the DapA family. As to quaternary structure, homotetramer; dimer of dimers.

It is found in the cytoplasm. It catalyses the reaction L-aspartate 4-semialdehyde + pyruvate = (2S,4S)-4-hydroxy-2,3,4,5-tetrahydrodipicolinate + H2O + H(+). The protein operates within amino-acid biosynthesis; L-lysine biosynthesis via DAP pathway; (S)-tetrahydrodipicolinate from L-aspartate: step 3/4. In terms of biological role, catalyzes the condensation of (S)-aspartate-beta-semialdehyde [(S)-ASA] and pyruvate to 4-hydroxy-tetrahydrodipicolinate (HTPA). The chain is 4-hydroxy-tetrahydrodipicolinate synthase from Vibrio cholerae serotype O1 (strain M66-2).